Here is a 98-residue protein sequence, read N- to C-terminus: Integration host factor subunit beta (98 aa).

Belongs to the bacterial histone-like protein family. Heterodimer of an alpha and a beta chain.

This protein is one of the two subunits of integration host factor, a specific DNA-binding protein that functions in genetic recombination as well as in transcriptional and translational control. The protein is Integration host factor subunit beta of Hahella chejuensis (strain KCTC 2396).